Reading from the N-terminus, the 141-residue chain is Hemoglobin subunit alpha (141 aa).

Residues 1 to 141 form the Globin domain; the sequence is VLSPADKTNV…VSTVLTSKYR (141 aa). Ser-3 bears the Phosphoserine mark. Lys-7 is modified (N6-succinyllysine). Thr-8 is modified (phosphothreonine). Lys-11 carries the post-translational modification N6-succinyllysine. Lys-16 is modified (N6-acetyllysine; alternate). Lys-16 bears the N6-succinyllysine; alternate mark. Residue Tyr-24 is modified to Phosphotyrosine. Ser-35 carries the post-translational modification Phosphoserine. Lys-40 carries the post-translational modification N6-succinyllysine. Ser-49 bears the Phosphoserine mark. His-58 is a binding site for O2. A heme b-binding site is contributed by His-87. At Ser-102 the chain carries Phosphoserine. Thr-108 is modified (phosphothreonine). A Phosphoserine modification is found at Ser-124. Phosphothreonine occurs at positions 134 and 137. Ser-138 is modified (phosphoserine).

It belongs to the globin family. Heterotetramer of two alpha chains and two beta chains. In terms of tissue distribution, red blood cells.

Functionally, involved in oxygen transport from the lung to the various peripheral tissues. In terms of biological role, hemopressin acts as an antagonist peptide of the cannabinoid receptor CNR1. Hemopressin-binding efficiently blocks cannabinoid receptor CNR1 and subsequent signaling. The chain is Hemoglobin subunit alpha (HBA) from Lutra lutra (European river otter).